We begin with the raw amino-acid sequence, 492 residues long: Probable malate:quinone oxidoreductase 1 (492 aa).

This sequence belongs to the MQO family. Requires FAD as cofactor.

It carries out the reaction (S)-malate + a quinone = a quinol + oxaloacetate. The protein operates within carbohydrate metabolism; tricarboxylic acid cycle; oxaloacetate from (S)-malate (quinone route): step 1/1. This Staphylococcus aureus (strain MW2) protein is Probable malate:quinone oxidoreductase 1.